A 142-amino-acid chain; its full sequence is ATP synthase epsilon chain (142 aa).

This sequence belongs to the ATPase epsilon chain family. As to quaternary structure, F-type ATPases have 2 components, CF(1) - the catalytic core - and CF(0) - the membrane proton channel. CF(1) has five subunits: alpha(3), beta(3), gamma(1), delta(1), epsilon(1). CF(0) has three main subunits: a, b and c.

The protein resides in the cell inner membrane. In terms of biological role, produces ATP from ADP in the presence of a proton gradient across the membrane. The chain is ATP synthase epsilon chain from Shewanella baltica (strain OS155 / ATCC BAA-1091).